We begin with the raw amino-acid sequence, 353 residues long: Farnesyl pyrophosphate synthase (353 aa).

The isopentenyl diphosphate site is built by lysine 57, arginine 60, and glutamine 96. Lysine 57 bears the N6-(2-hydroxyisobutyryl)lysine; alternate mark. Lysine 57 is modified (N6-acetyllysine; alternate). Residues aspartate 103 and aspartate 107 each coordinate Mg(2+). A dimethylallyl diphosphate-binding site is contributed by arginine 112. Arginine 113 is an isopentenyl diphosphate binding site. 5 residues coordinate dimethylallyl diphosphate: lysine 200, threonine 201, glutamine 240, lysine 257, and lysine 266.

Belongs to the FPP/GGPP synthase family. Homodimer. Interacts with RSAD2. Interacts with bovine leukemia virus (BLV) protein G4. The cofactor is Mg(2+).

It localises to the cytoplasm. It carries out the reaction isopentenyl diphosphate + dimethylallyl diphosphate = (2E)-geranyl diphosphate + diphosphate. It catalyses the reaction isopentenyl diphosphate + (2E)-geranyl diphosphate = (2E,6E)-farnesyl diphosphate + diphosphate. Its pathway is isoprenoid biosynthesis; farnesyl diphosphate biosynthesis; farnesyl diphosphate from geranyl diphosphate and isopentenyl diphosphate: step 1/1. It functions in the pathway isoprenoid biosynthesis; geranyl diphosphate biosynthesis; geranyl diphosphate from dimethylallyl diphosphate and isopentenyl diphosphate: step 1/1. Inactivated by interferon-induced RSAD2. This inactivation may result of disruption of lipid rafts at the plasma membrane, and thus have an antiviral effect since many enveloped viruses need lipid rafts to bud efficiently out of the cell. Functionally, key enzyme in isoprenoid biosynthesis which catalyzes the formation of farnesyl diphosphate (FPP), a precursor for several classes of essential metabolites including sterols, dolichols, carotenoids, and ubiquinones. FPP also serves as substrate for protein farnesylation and geranylgeranylation. Catalyzes the sequential condensation of isopentenyl pyrophosphate with the allylic pyrophosphates, dimethylallyl pyrophosphate, and then with the resultant geranylpyrophosphate to the ultimate product farnesyl pyrophosphate. The chain is Farnesyl pyrophosphate synthase (FDPS) from Bos taurus (Bovine).